The following is a 113-amino-acid chain: Phosphoribosyl-ATP pyrophosphatase (113 aa).

Belongs to the PRA-PH family.

Its subcellular location is the cytoplasm. It catalyses the reaction 1-(5-phospho-beta-D-ribosyl)-ATP + H2O = 1-(5-phospho-beta-D-ribosyl)-5'-AMP + diphosphate + H(+). It participates in amino-acid biosynthesis; L-histidine biosynthesis; L-histidine from 5-phospho-alpha-D-ribose 1-diphosphate: step 2/9. This chain is Phosphoribosyl-ATP pyrophosphatase, found in Hydrogenovibrio crunogenus (strain DSM 25203 / XCL-2) (Thiomicrospira crunogena).